A 333-amino-acid chain; its full sequence is tRNA N6-adenosine threonylcarbamoyltransferase (333 aa).

The Fe cation site is built by His111 and His115. Substrate contacts are provided by residues 134–138 (LVSGG), Asp167, Gly180, and Asn272. Fe cation is bound at residue Asp300.

This sequence belongs to the KAE1 / TsaD family. It depends on Fe(2+) as a cofactor.

It is found in the cytoplasm. The enzyme catalyses L-threonylcarbamoyladenylate + adenosine(37) in tRNA = N(6)-L-threonylcarbamoyladenosine(37) in tRNA + AMP + H(+). Required for the formation of a threonylcarbamoyl group on adenosine at position 37 (t(6)A37) in tRNAs that read codons beginning with adenine. Is involved in the transfer of the threonylcarbamoyl moiety of threonylcarbamoyl-AMP (TC-AMP) to the N6 group of A37, together with TsaE and TsaB. TsaD likely plays a direct catalytic role in this reaction. This chain is tRNA N6-adenosine threonylcarbamoyltransferase, found in Legionella pneumophila (strain Corby).